Here is a 475-residue protein sequence, read N- to C-terminus: Chemotaxis protein MotD (475 aa).

3 disordered regions span residues 1–175 (MRPL…PVGG), 195–243 (LQPE…SEPD), and 408–475 (GDSA…HVYM). Residues 9-22 (RTSAASRPAQSLSV) are compositionally biased toward polar residues. Residues 79–100 (ADVPASMADAASPDARPASERA) are compositionally biased toward low complexity. The span at 143–155 (HSRETVHALRDAI) shows a compositional bias: basic and acidic residues. Over residues 408 to 417 (GDSASGGGGQ) the composition is skewed to gly residues. The segment covering 427–449 (EGRERAGDDGQGRQPRDGGRAAT) has biased composition (basic and acidic residues).

It localises to the cytoplasm. In terms of biological role, required for the rotation of the flagellar motor. Has a positive effect as flagellar rotation increases when an excess of motd is present. This is Chemotaxis protein MotD (motD) from Rhizobium meliloti (Ensifer meliloti).